A 235-amino-acid chain; its full sequence is Acyl-protein thioesterase 1 (235 aa).

Active-site charge relay system residues include Ser-125, Asp-181, and His-213.

Belongs to the AB hydrolase superfamily. AB hydrolase 2 family.

Its subcellular location is the cytoplasm. The protein localises to the nucleus. It carries out the reaction S-hexadecanoyl-L-cysteinyl-[protein] + H2O = L-cysteinyl-[protein] + hexadecanoate + H(+). Functionally, hydrolyzes fatty acids from S-acylated cysteine residues in proteins with a strong preference for palmitoylated G-alpha proteins over other acyl substrates. Mediates the deacylation of G-alpha proteins such as GPA1 in vivo, but has weak or no activity toward palmitoylated Ras proteins. Has weak lysophospholipase activity in vitro; however such activity may not exist in vivo. This is Acyl-protein thioesterase 1 from Gibberella zeae (strain ATCC MYA-4620 / CBS 123657 / FGSC 9075 / NRRL 31084 / PH-1) (Wheat head blight fungus).